A 342-amino-acid chain; its full sequence is N-alpha-acetyl-L-2,4-diaminobutyric acid deacetylase (342 aa).

Residues 103–124 are disordered; it reads TAGRRTSPMDGGNLNRSFPGDP.

It belongs to the DoeB deacetylase family. Zn(2+) is required as a cofactor.

The protein localises to the cytoplasm. It catalyses the reaction (2S)-2-acetamido-4-aminobutanoate + H2O = L-2,4-diaminobutanoate + acetate. Involved in the degradation of ectoine, which allows H.elongata to utilize ectoine as both a carbon and a nitrogen source for growth. Catalyzes the deacetylation of N-alpha-acetyl-L-2,4-diaminobutyrate (N-alpha-Ac-DABA) to yield L-2,4-diaminobutyrate (DABA). This is N-alpha-acetyl-L-2,4-diaminobutyric acid deacetylase from Halomonas elongata (strain ATCC 33173 / DSM 2581 / NBRC 15536 / NCIMB 2198 / 1H9).